Consider the following 237-residue polypeptide: Small ribosomal subunit protein uS3 (237 aa).

Residues 39–107 enclose the KH type-2 domain; it reads IRAYLMEELK…ETHLNIVEVR (69 aa). The segment at 213-237 is disordered; that stretch reads MASERRATESDNQGGSGRERRRENA.

This sequence belongs to the universal ribosomal protein uS3 family. Part of the 30S ribosomal subunit. Forms a tight complex with proteins S10 and S14.

In terms of biological role, binds the lower part of the 30S subunit head. Binds mRNA in the 70S ribosome, positioning it for translation. The sequence is that of Small ribosomal subunit protein uS3 from Rhizobium meliloti (strain 1021) (Ensifer meliloti).